We begin with the raw amino-acid sequence, 163 residues long: Nucleotide-binding protein PM1656 (163 aa).

This sequence belongs to the YajQ family.

Nucleotide-binding protein. The sequence is that of Nucleotide-binding protein PM1656 from Pasteurella multocida (strain Pm70).